The following is a 648-amino-acid chain: Transcription termination factor FttA (648 aa).

The interval 1–179 is not required for dimerization, required for cleavage at some sites; it reads MIKRETQVDQ…QVGRNIYRKP (179 aa). The tract at residues 9 to 76 is KHa; that stretch reads DQILKDIRGI…ISIRPDPDVL (68 aa). A KHb region spans residues 77-144; sequence LPPEEAEKLI…WAPKVVRTPP (68 aa). The metallo-beta-lactamase N-terminus stretch occupies residues 185-395; the sequence is WIRITGLGGF…LVMESTYGGA (211 aa). The Zn(2+) site is built by H253, H255, D257, H258, H341, and D364. Residues 396–589 form a beta-Casp region; sequence NDIQMPREEA…MEVHTIDGFS (194 aa). The interval 590 to 648 is metallo-beta-lactamase C-terminus; sequence GHADRRELMNYVAKVRPRPERVITVHGEPQKCLDLATSIHRKFGLSTRAPNNLDTIRLR. Residue H615 participates in Zn(2+) binding.

The protein belongs to the metallo-beta-lactamase superfamily. RNA-metabolizing metallo-beta-lactamase-like family. FttA subfamily. As to quaternary structure, homodimer. Interacts with RNA polymerase (RNAP), interacts with the Spt4-Spt5 complex. It depends on Zn(2+) as a cofactor.

With respect to regulation, endoRNase activity is inhibited by 1,10-phenanthroline. Functionally, terminates transcription on the whole genome. Termination is linked to FttA-mediated RNA cleavage and does not require NTP hydrolysis. Cleaves endonucleolytically at the RNA exit channel of RNA polymerase (RNAP); the 5'-3' exonuclease activity of this protein degrades the nascent RNA released from RNAP. In terms of biological role, a single-stranded endoribonuclease (endoRNase) with a preference for cleavage at CA dinucleotides. Has 5'-3' exoribonuclease (exoRNase) activity on 5'-monophosphorylated RNA; this activity does not occur on 5'-tri-phosphorylated or 5'-OH substrates. Also has weak activity 5'-3' exodeoxyribonuclease activity on ssDNA. The sequence is that of Transcription termination factor FttA from Pyrococcus abyssi (strain GE5 / Orsay).